We begin with the raw amino-acid sequence, 652 residues long: ATP-binding cassette sub-family G member 5 (652 aa).

Positions M1–V30 are disordered. At M1–K384 the chain is on the cytoplasmic side. Positions N18–V30 are enriched in polar residues. An ABC transporter domain is found at L39–E294. G87–T94 is an ATP binding site. The chain crosses the membrane as a helical span at residues Q385–L405. An ABC transmembrane type-2 domain is found at M389–R646. Topologically, residues L406–G422 are extracellular. Residues L423–F443 traverse the membrane as a helical segment. At P444 to Y468 the chain is on the cytoplasmic side. A helical transmembrane segment spans residues V469–T490. Residues L491–G501 are Extracellular-facing. A helical membrane pass occupies residues Y502 to L522. The Cytoplasmic portion of the chain corresponds to G523–N529. The chain crosses the membrane as a helical span at residues I530–I550. Topologically, residues R551–N624 are extracellular. 2 N-linked (GlcNAc...) asparagine glycosylation sites follow: N585 and N592. The helical transmembrane segment at F625–V645 threads the bilayer. Residues R646–R652 lie on the Cytoplasmic side of the membrane.

This sequence belongs to the ABC transporter superfamily. ABCG family. Eye pigment precursor importer (TC 3.A.1.204) subfamily. As to quaternary structure, heterodimer with ABCG8. It depends on Mg(2+) as a cofactor. Post-translationally, N-glycosylated. N-glycosylation is important for efficient export out of the endoplasmic reticulum. In terms of tissue distribution, detected in liver (at protein level). Expressed only in liver and intestine.

It is found in the cell membrane. It localises to the apical cell membrane. The enzyme catalyses cholesterol(in) + ATP + H2O = cholesterol(out) + ADP + phosphate + H(+). The catalysed reaction is sitosterol(in) + ATP + H2O = sitosterol(out) + ADP + phosphate + H(+). ABCG5 and ABCG8 form an obligate heterodimer that mediates Mg(2+)- and ATP-dependent sterol transport across the cell membrane. Plays an essential role in the selective transport of dietary plant sterols and cholesterol in and out of the enterocytes and in the selective sterol excretion by the liver into bile. Required for normal sterol homeostasis. The heterodimer with ABCG8 has ATPase activity. This is ATP-binding cassette sub-family G member 5 from Rattus norvegicus (Rat).